Here is a 341-residue protein sequence, read N- to C-terminus: Glyceraldehyde-3-phosphate dehydrogenase 2 (341 aa).

NAD(+)-binding positions include 13 to 14, Asp-35, and Lys-85; that span reads RI. Residues 157-159, Thr-188, 217-218, and Arg-240 each bind D-glyceraldehyde 3-phosphate; these read SCT and TG. Residue Cys-158 is the Nucleophile of the active site. Asn-322 serves as a coordination point for NAD(+).

It belongs to the glyceraldehyde-3-phosphate dehydrogenase family. As to quaternary structure, homotetramer.

It localises to the cytoplasm. It carries out the reaction D-glyceraldehyde 3-phosphate + phosphate + NAD(+) = (2R)-3-phospho-glyceroyl phosphate + NADH + H(+). The protein operates within carbohydrate degradation; glycolysis; pyruvate from D-glyceraldehyde 3-phosphate: step 1/5. This Caenorhabditis briggsae protein is Glyceraldehyde-3-phosphate dehydrogenase 2.